The sequence spans 195 residues: CD70 antigen (195 aa).

Over 1 to 23 the chain is Cytoplasmic; sequence MPEEGRPCPWVRWSGTAFQRQWP. A helical; Signal-anchor for type II membrane protein membrane pass occupies residues 24-44; sequence WLLLVVFITVFCCWFHCSGLL. Residues 45-195 lie on the Extracellular side of the membrane; the sequence is SKQQQRLLEH…TFFGVQWICP (151 aa). In terms of domain architecture, THD spans 58 to 193; that stretch reads HTAELQLNLT…DETFFGVQWI (136 aa). 2 N-linked (GlcNAc...) asparagine glycosylation sites follow: N65 and N116. Intrachain disulfides connect C117/C153 and C135/C170. N172 carries an N-linked (GlcNAc...) asparagine glycan.

The protein belongs to the tumor necrosis factor family. In terms of assembly, homotrimer. N-glycosylated. In terms of tissue distribution, very low level of expression. Detected in splenocytes and thymocytes.

It localises to the cell membrane. Functionally, expressed at the plasma membrane of B cells, it is the ligand of the CD27 receptor which is specifically expressed at the surface of T cells. The CD70-CD27 signaling pathway mediates antigen-specific T cell activation and expansion which in turn provides immune surveillance of B cells. In Mus musculus (Mouse), this protein is CD70 antigen.